Reading from the N-terminus, the 192-residue chain is VQ motif-containing protein 22 (192 aa).

Low complexity predominate over residues 24–38 (ASTAVTTTTAGDTTS). Residues 24-65 (ASTAVTTTTAGDTTSIDSRLSPETGRVTKPTRRRSRASRRTP) are disordered. Residues 52-62 (KPTRRRSRASR) show a composition bias toward basic residues. The short motif at 76-85 (FRAMVQQYTG) is the VQ element. Disordered regions lie at residues 101–135 (FSLT…PQRP) and 163–192 (FGTV…SRLQ). 2 stretches are compositionally biased toward low complexity: residues 102-114 (SLTS…AGSS) and 175-192 (APSS…SRLQ).

It localises to the nucleus. In terms of biological role, may function as positive regulator of plant growth. The protein is VQ motif-containing protein 22 of Arabidopsis thaliana (Mouse-ear cress).